The primary structure comprises 458 residues: COBRA-like protein 2 (458 aa).

The N-terminal stretch at 1 to 29 (MARFLLGAAAIALLAGVSSLLLMVPFAEA) is a signal peptide. 8 N-linked (GlcNAc...) asparagine glycosylation sites follow: Asn-38, Asn-163, Asn-171, Asn-211, Asn-236, Asn-318, Asn-333, and Asn-352. A helical membrane pass occupies residues 430–450 (VFLLMSFLVCGTLAFLHNHLV).

It belongs to the COBRA family.

It is found in the membrane. This chain is COBRA-like protein 2 (BC1L2), found in Oryza sativa subsp. japonica (Rice).